The primary structure comprises 249 residues: Probable transcriptional regulatory protein AB57_1731 (249 aa).

The protein belongs to the TACO1 family.

It is found in the cytoplasm. The sequence is that of Probable transcriptional regulatory protein AB57_1731 from Acinetobacter baumannii (strain AB0057).